A 273-amino-acid polypeptide reads, in one-letter code: Nitrogenase iron protein 2 (273 aa).

8 to 15 provides a ligand contact to ATP; the sequence is GKGGIGKS. C95 is a [4Fe-4S] cluster binding site. R98 is subject to ADP-ribosylarginine; by dinitrogenase reductase ADP-ribosyltransferase. [4Fe-4S] cluster is bound at residue C130.

The protein belongs to the NifH/BchL/ChlL family. Homodimer. Requires [4Fe-4S] cluster as cofactor. The reversible ADP-ribosylation of Arg-98 inactivates the nitrogenase reductase and regulates nitrogenase activity.

The catalysed reaction is N2 + 8 reduced [2Fe-2S]-[ferredoxin] + 16 ATP + 16 H2O = H2 + 8 oxidized [2Fe-2S]-[ferredoxin] + 2 NH4(+) + 16 ADP + 16 phosphate + 6 H(+). In terms of biological role, the key enzymatic reactions in nitrogen fixation are catalyzed by the nitrogenase complex, which has 2 components: the iron protein and the molybdenum-iron protein. This chain is Nitrogenase iron protein 2 (nifH2), found in Methanosarcina barkeri.